We begin with the raw amino-acid sequence, 442 residues long: Protein trichome birefringence-like 26 (442 aa).

The helical; Signal-anchor for type II membrane protein transmembrane segment at 51 to 71 (FFLYFSLVALAYYFIISSLAV) threads the bilayer. The short motif at 164-166 (GDS) is the GDS motif element. A DCXHWCLPGXXDXWN motif motif is present at residues 409–423 (DCLHWCLPGPIDSWN).

Belongs to the PC-esterase family. TBL subfamily.

It localises to the membrane. Its function is as follows. May be involved in the O-acetylation of mannan. May act as a bridging protein that binds pectin and other cell wall polysaccharides. Probably involved in maintaining esterification of pectins. This Arabidopsis thaliana (Mouse-ear cress) protein is Protein trichome birefringence-like 26 (TBL26).